The following is a 110-amino-acid chain: Transcription factor S (110 aa).

Zn(2+) is bound by residues cysteine 4, cysteine 7, cysteine 22, cysteine 25, cysteine 71, cysteine 74, cysteine 99, and cysteine 102. The segment at 67–107 (TKVTCPKCGNDTAYWWEMQTRAGDEPSTIFYKCTKCGYTWR) adopts a TFIIS-type zinc-finger fold.

Belongs to the archaeal rpoM/eukaryotic RPA12/RPB9/RPC11 RNA polymerase family.

It is found in the chromosome. Involved in transcriptional proofreading and fidelity. Induces RNA cleavage activity in RNA polymerase (RNAP). Stimulates transcription elongation by RNAP on both naked DNA and histone-bound DNA (chromatin), facilitating transcription through the histone barrier. Stimulation depends on transcript cleavage. In the presence of TFS, the cleavage activity of RNAP truncates RNA back to position +15 in a stepwise manner by releasing mainly dinucleotides from the 3'-end of the nascent RNA. The truncated RNAs are able to continue elongation. Misincorporation of nucleotides during elongation of transcription leads to arrested elongation complexes which are rescued by TFS-promoted removal of a dinucleotide from the 3'-end. TFS is able to induce a cleavage resynthesis cycle in stalled elongation complexes (resulting from the next missing nucleotide or a reduced incorporation rate of a wrong nucleotide) preventing misincorporation and enabling proofreading in a post-incorporation manner. Pausing of elongation complexes is the main determinant of TFS-induced RNA cleavage. The polypeptide is Transcription factor S (Thermococcus kodakarensis (strain ATCC BAA-918 / JCM 12380 / KOD1) (Pyrococcus kodakaraensis (strain KOD1))).